Here is a 611-residue protein sequence, read N- to C-terminus: Glutathione hydrolase proenzyme 2 (611 aa).

Topologically, residues 1 to 42 (MSPTDTTPLLYSWDDQSRHQDPDWHKLRNYHGAWYRRISRRR) are cytoplasmic. A helical; Signal-anchor for type II membrane protein membrane pass occupies residues 43-63 (FSQFIFAFGLMTLFVLVYSIS). At 64–611 (SNLHTPTQFT…PRKYGQAAAY (548 aa)) the chain is on the lumenal side. N-linked (GlcNAc...) asparagine glycosylation occurs at Asn138. Arg147 provides a ligand contact to L-glutamate. 3 N-linked (GlcNAc...) asparagine glycosylation sites follow: Asn153, Asn297, and Asn396. The Nucleophile role is filled by Thr420. L-glutamate-binding positions include Thr438, Asn440, Gln459, Asp462, 490–491 (SS), and 512–513 (GG).

The protein belongs to the gamma-glutamyltransferase family. Heterodimer composed of the light and heavy chains. The active site is located in the light chain. In terms of processing, cleaved by autocatalysis into a large and a small subunit.

It is found in the vacuole membrane. The catalysed reaction is an N-terminal (5-L-glutamyl)-[peptide] + an alpha-amino acid = 5-L-glutamyl amino acid + an N-terminal L-alpha-aminoacyl-[peptide]. It catalyses the reaction glutathione + H2O = L-cysteinylglycine + L-glutamate. It carries out the reaction an S-substituted glutathione + H2O = an S-substituted L-cysteinylglycine + L-glutamate. It functions in the pathway sulfur metabolism; glutathione metabolism. In terms of biological role, catalyzes the transfer of the gamma-glutamyl moiety of glutathione (GSH) and other gamma-glutamyl compounds to amino acids and peptides. Major GSH-degrading enzyme, catalyzing the hydrolytic release of L-glutamate from GSH. Plays a role in the turnover of the vacuolar GSH, serving as an alternative nitrogen source during nitrogen starvation. In Schizosaccharomyces pombe (strain 972 / ATCC 24843) (Fission yeast), this protein is Glutathione hydrolase proenzyme 2 (ggt2).